A 422-amino-acid polypeptide reads, in one-letter code: MSSSCSGLSRVLVAVATALVSASSPCPQAWGPPGVQYGQPGRSVKLCCPGVTAGDPVSWFRDGEPKLLQGPDSGLGHELVLAQADSTDEGTYICQTLDGALGGTVTLQLGYPPARPVVSCQAADYENFSCTWSPSQISGLPTRYLTSYRKKTVLGADSQRRSPSTGPWPCPQDPLGAARCVVHGAEFWSQYRINVTEVNPLGASTRLLDVSLQSILRPDPPQGLRVESVPGYPRRLRASWTYPASWPCQPHFLLKFRLQYRPAQHPAWSTVEPAGLEEVITDAVAGLPHAVRVSARDFLDAGTWSTWSPEAWGTPSTGTIPKEIPAWGQLHTQPEVEPQVDSPAPPRPSLQPHPRLLDHRDSVEQVAVLASLGILSFLGLVAGALALGLWLRLRRGGKDGSPKPGFLASVIPVDRRPGAPNL.

The N-terminal stretch at 1 to 22 (MSSSCSGLSRVLVAVATALVSA) is a signal peptide. At 24 to 370 (SPCPQAWGPP…DSVEQVAVLA (347 aa)) the chain is on the extracellular side. One can recognise an Ig-like C2-type domain in the interval 27–110 (PQAWGPPGVQ…LGGTVTLQLG (84 aa)). Cystine bridges form between Cys-48/Cys-94, Cys-120/Cys-130, and Cys-170/Cys-180. Fibronectin type-III domains follow at residues 112–219 (PPAR…LRPD) and 220–317 (PPQG…TPST). The N-linked (GlcNAc...) asparagine glycan is linked to Asn-127. The N-linked (GlcNAc...) asparagine glycan is linked to Asn-194. Positions 304–308 (WSTWS) match the WSXWS motif motif. The disordered stretch occupies residues 335-355 (EVEPQVDSPAPPRPSLQPHPR). Residues 371 to 391 (SLGILSFLGLVAGALALGLWL) form a helical membrane-spanning segment. At 392-422 (RLRRGGKDGSPKPGFLASVIPVDRRPGAPNL) the chain is on the cytoplasmic side. A disordered region spans residues 398 to 422 (KDGSPKPGFLASVIPVDRRPGAPNL). A compositionally biased stretch (basic and acidic residues) spans 413–422 (VDRRPGAPNL).

This sequence belongs to the type I cytokine receptor family. Type 3 subfamily. On IL11 binding, forms a multimer complex with IL6ST/gp130. In terms of processing, a short soluble form is also released from the membrane by proteolysis. The sIL11RA is formed either by limited proteolysis of membrane-bound receptors, a process referred to as ectodomain shedding, or directly secreted from the cells after alternative mRNA splicing. mIL11RA is cleaved by the proteases ADAM10, ELANE and PRTN3. As to expression, expressed in a number of cell lines, including the myelogenous leukemia cell line K-562, the megakaryocytic leukemia cell line M-07e, the erythroleukemia cell line TF-1, and the osteosarcoma cell lines, MG-63 and SaOS-2. Also expressed in normal and malignant prostate epithelial cell lines. Expression levels are increased in prostate carcinoma.

Its subcellular location is the membrane. The protein resides in the secreted. Receptor for interleukin-11 (IL11). The receptor systems for IL6, LIF, OSM, CNTF, IL11 and CT1 can utilize IL6ST for initiating signal transmission. The IL11/IL11RA/IL6ST complex may be involved in the control of proliferation and/or differentiation of skeletogenic progenitor or other mesenchymal cells. Essential for the normal development of craniofacial bones and teeth. Restricts suture fusion and tooth number. Functionally, soluble form of IL11 receptor (sIL11RA) that acts as an agonist of IL11 activity. The IL11:sIL11RA complex binds to IL6ST/gp130 on cell surfaces and induces signaling also on cells that do not express membrane-bound IL11RA in a process called IL11 trans-signaling. This is Interleukin-11 receptor subunit alpha from Homo sapiens (Human).